A 489-amino-acid polypeptide reads, in one-letter code: ATF/CREB activator 1 (489 aa).

One can recognise a bZIP domain in the interval 384–447 (AWKRARLLER…QKMKKISRLH (64 aa)). Residues 386-406 (KRARLLERNRIAASKCRQRKK) form a basic motif region. Residues 412-419 (LQREFDQI) are leucine-zipper.

Belongs to the bZIP family.

The protein localises to the nucleus. In terms of biological role, transcriptional activator of promoters containing ATF/CREB sites. Can independently stimulate transcription through ATF/CREB sites. Important for a variety of biological functions including growth on non-optimal carbon sources. Regulates the expression of COS8. Has efficient silencing blocking activities. The sequence is that of ATF/CREB activator 1 (ACA1) from Saccharomyces cerevisiae (strain ATCC 204508 / S288c) (Baker's yeast).